Consider the following 164-residue polypeptide: Protein phosphatase 1 regulatory subunit 14C (164 aa).

Positions 1-19 are enriched in gly residues; that stretch reads MSVVTGGGEAAGGGGGGGA. The segment at 1–70 is disordered; the sequence is MSVVTGGGEA…QQQRRHQQGK (70 aa). Ser-2 is modified (N-acetylserine). A Phosphoserine modification is found at Ser-25. The residue at position 27 (Arg-27) is an Omega-N-methylarginine. Position 33 is a phosphoserine (Ser-33). A compositionally biased stretch (low complexity) spans 50-62; the sequence is VTTVAAAGQVQQQ. A Phosphothreonine; by ILK1 modification is found at Thr-72.

This sequence belongs to the PP1 inhibitor family. Post-translationally, the main inhibitory site appears to be Thr-72. Has over 600-fold higher inhibitory activity when phosphorylated, creating a molecular switch for regulating the phosphorylation status of PPP1CA substrates and smooth muscle contraction. Detected in heart, muscle, spinal cord, hippocampus, hypothalamus, thalamus, midbrain, brain stem, cerebellum, brain cortex and olfactory bulb.

Its subcellular location is the endomembrane system. Its function is as follows. Inhibitor of the PP1 regulatory subunit PPP1CA. This is Protein phosphatase 1 regulatory subunit 14C (Ppp1r14c) from Mus musculus (Mouse).